Consider the following 1042-residue polypeptide: Probable serine/threonine protein kinase IRE4 (1042 aa).

Composition is skewed to basic and acidic residues over residues 1–10 (MAEENRKDRG), 102–115 (EEIK…GKDE), and 314–327 (QRNE…RRDK). 3 disordered regions span residues 1 to 75 (MAEE…GTKL), 90 to 115 (PPKY…GKDE), and 297 to 327 (WGST…RRDK). The C2H2-type; atypical zinc-finger motif lies at 402-421 (CRICEEEVPLFHLEPHSYIC). Positions 670–955 (FEIIKPISRG…AAEVKSHPFF (286 aa)) constitute a Protein kinase domain. Residues 676–684 (ISRGAFGKV) and Lys699 each bind ATP. Residue Asp793 is the Proton acceptor of the active site. Positions 830–850 (ESDVSPRTNSHHFQKNQEEER) are disordered. Ser854 carries the phosphoserine modification. In terms of domain architecture, AGC-kinase C-terminal spans 956-1042 (QGVDWENLAL…KLFFLLLCVF (87 aa)).

Belongs to the protein kinase superfamily. AGC Ser/Thr protein kinase family.

It catalyses the reaction L-seryl-[protein] + ATP = O-phospho-L-seryl-[protein] + ADP + H(+). It carries out the reaction L-threonyl-[protein] + ATP = O-phospho-L-threonyl-[protein] + ADP + H(+). This Arabidopsis thaliana (Mouse-ear cress) protein is Probable serine/threonine protein kinase IRE4.